The chain runs to 62 residues: Small ribosomal subunit protein eS27 (62 aa).

Positions 17, 20, 36, and 39 each coordinate Zn(2+). A C4-type zinc finger spans residues 17-39; the sequence is CPDCENEQLVFEKATSVVECTVC.

It belongs to the eukaryotic ribosomal protein eS27 family. As to quaternary structure, part of the 30S ribosomal subunit. Zn(2+) serves as cofactor.

In Methanocorpusculum labreanum (strain ATCC 43576 / DSM 4855 / Z), this protein is Small ribosomal subunit protein eS27.